The chain runs to 373 residues: Homoserine O-acetyltransferase (373 aa).

The AB hydrolase-1 domain maps to 46–355 (NAILICHPLT…NPNGHDSFLL (310 aa)). The active-site Nucleophile is Ser151. Arg221 provides a ligand contact to substrate. Catalysis depends on residues Asp317 and His350. Residue Asp351 participates in substrate binding.

This sequence belongs to the AB hydrolase superfamily. MetX family. In terms of assembly, homodimer.

The protein resides in the cytoplasm. The catalysed reaction is L-homoserine + acetyl-CoA = O-acetyl-L-homoserine + CoA. Its pathway is amino-acid biosynthesis; L-methionine biosynthesis via de novo pathway; O-acetyl-L-homoserine from L-homoserine: step 1/1. Transfers an acetyl group from acetyl-CoA to L-homoserine, forming acetyl-L-homoserine. In Zymomonas mobilis subsp. mobilis (strain ATCC 31821 / ZM4 / CP4), this protein is Homoserine O-acetyltransferase.